The primary structure comprises 233 residues: Cytochrome c oxidase subunit 3 (233 aa).

Helical transmembrane passes span 62–82, 98–118, 135–155, and 172–192; these read VVLF…AYLI, LELL…FVMH, WFGI…YEYF, and VLTG…LSVL.

It belongs to the cytochrome c oxidase subunit 3 family.

The protein resides in the cell membrane. The catalysed reaction is 4 Fe(II)-[cytochrome c] + O2 + 8 H(+)(in) = 4 Fe(III)-[cytochrome c] + 2 H2O + 4 H(+)(out). The polypeptide is Cytochrome c oxidase subunit 3 (ctaE) (Synechocystis sp. (strain ATCC 27184 / PCC 6803 / Kazusa)).